A 638-amino-acid polypeptide reads, in one-letter code: MATIFDSLISSRLDGTRFSFYNDEEIQQMSVKEIHNPMAYDELNNPTSHGICDESMGVSALDKLSKCKTCGCDSVYCPGHMGHIKLTSTCYNPFTMKLLHSLLKSKCLVCHRLRISPKRIELFEIRLKLIKLGYLVEAEKLSDFNHFSLESIDSAIRILRKKTKGKTNKKEEKEDSEEVEEDKYAAKEALENLIQKEKENREIFYSHISSILQEDTPNESIGNAITVAIRDITKEIMNSVVPSKCPHCDVCNPRIKKDGATKFFQMPLSNRDTKAMLSSHGRIDMRIDISTMGAISEYDEEDDESSGESEVREGDEEQEKKQKYLSPIEVLEHMRRLWDVEDTLLNELFDNYKIFFMNNLLVSQNRFRPESSGGKQSGDDRDYLHAHSAMLTKIINANIAFRRTIELKENLTDDRNLETESEKSKTQQIDLSKTEITSKQVIKAWAELQESVNCYLDSSLAAKLENKEKPGLRQLLERKEGIFRMKMMGKRVNFAGRSVISPDPYISTDQIGVPEFIARTITFPEPAKNIEKLKRCVINGAHKHPGANFIEYPNGERKALENMTLEEKKQSSIIRKWRKIVYRHMQTGDPLLVNRQPTLHKPSIMAHNAIILPKEQTIRMHYSNCKSYNADFDGDEMK.

Positions 297 to 317 are enriched in acidic residues; it reads EYDEEDDESSGESEVREGDEE. Residues 297-321 form a disordered region; sequence EYDEEDDESSGESEVREGDEEQEKK.

The protein belongs to the RNA polymerase beta' chain family. Each class of RNA polymerase is assembled from 9 to 14 different polypeptides. This subunit is the largest component of RNA polymerase I.

Its subcellular location is the nucleus. It carries out the reaction RNA(n) + a ribonucleoside 5'-triphosphate = RNA(n+1) + diphosphate. In terms of biological role, DNA-dependent RNA polymerase catalyzes the transcription of DNA into RNA using the four ribonucleoside triphosphates as substrates. RNA polymerase I is essentially used to transcribe ribosomal DNA units. In Euplotoides octocarinatus (Freshwater ciliate), this protein is DNA-directed RNA polymerase I subunit RPA1 (RPA1).